A 131-amino-acid polypeptide reads, in one-letter code: Large ribosomal subunit protein bL12 (131 aa).

The protein belongs to the bacterial ribosomal protein bL12 family. In terms of assembly, homodimer. Part of the ribosomal stalk of the 50S ribosomal subunit. Forms a multimeric L10(L12)X complex, where L10 forms an elongated spine to which 2 to 4 L12 dimers bind in a sequential fashion. Binds GTP-bound translation factors.

Functionally, forms part of the ribosomal stalk which helps the ribosome interact with GTP-bound translation factors. Is thus essential for accurate translation. This Parasynechococcus marenigrum (strain WH8102) protein is Large ribosomal subunit protein bL12.